The chain runs to 250 residues: Ubiquinone/menaquinone biosynthesis C-methyltransferase UbiE (250 aa).

S-adenosyl-L-methionine contacts are provided by residues Thr-74, Asp-94, 122-123 (DA), and Ser-139.

Belongs to the class I-like SAM-binding methyltransferase superfamily. MenG/UbiE family.

The catalysed reaction is a 2-demethylmenaquinol + S-adenosyl-L-methionine = a menaquinol + S-adenosyl-L-homocysteine + H(+). It carries out the reaction a 2-methoxy-6-(all-trans-polyprenyl)benzene-1,4-diol + S-adenosyl-L-methionine = a 5-methoxy-2-methyl-3-(all-trans-polyprenyl)benzene-1,4-diol + S-adenosyl-L-homocysteine + H(+). Its pathway is quinol/quinone metabolism; menaquinone biosynthesis; menaquinol from 1,4-dihydroxy-2-naphthoate: step 2/2. It functions in the pathway cofactor biosynthesis; ubiquinone biosynthesis. Functionally, methyltransferase required for the conversion of demethylmenaquinol (DMKH2) to menaquinol (MKH2) and the conversion of 2-polyprenyl-6-methoxy-1,4-benzoquinol (DDMQH2) to 2-polyprenyl-3-methyl-6-methoxy-1,4-benzoquinol (DMQH2). In Cereibacter sphaeroides (strain ATCC 17029 / ATH 2.4.9) (Rhodobacter sphaeroides), this protein is Ubiquinone/menaquinone biosynthesis C-methyltransferase UbiE.